Consider the following 254-residue polypeptide: 5'/3'-nucleotidase SurE (254 aa).

Positions 8, 9, 39, and 92 each coordinate a divalent metal cation.

The protein belongs to the SurE nucleotidase family. A divalent metal cation is required as a cofactor.

The protein localises to the cytoplasm. The enzyme catalyses a ribonucleoside 5'-phosphate + H2O = a ribonucleoside + phosphate. The catalysed reaction is a ribonucleoside 3'-phosphate + H2O = a ribonucleoside + phosphate. It catalyses the reaction [phosphate](n) + H2O = [phosphate](n-1) + phosphate + H(+). Nucleotidase with a broad substrate specificity as it can dephosphorylate various ribo- and deoxyribonucleoside 5'-monophosphates and ribonucleoside 3'-monophosphates with highest affinity to 3'-AMP. Also hydrolyzes polyphosphate (exopolyphosphatase activity) with the preference for short-chain-length substrates (P20-25). Might be involved in the regulation of dNTP and NTP pools, and in the turnover of 3'-mononucleotides produced by numerous intracellular RNases (T1, T2, and F) during the degradation of various RNAs. This Edwardsiella ictaluri (strain 93-146) protein is 5'/3'-nucleotidase SurE.